An 87-amino-acid polypeptide reads, in one-letter code: uncharacterized protein (87 aa).

It to B.subtilis XkdR.

This is an uncharacterized protein from Bacillus subtilis (strain 168).